Consider the following 408-residue polypeptide: Multidrug resistance protein MdtG (408 aa).

11 helical membrane passes run 16–36 (LIVA…VMPF), 58–78 (IVFS…GGLA), 92–112 (LGMG…QFLI), 115–135 (ALLG…ATQV), 146–166 (TLST…GLLA), 173–193 (PVFF…LFCI), 224–244 (LFVT…ILTL), 256–276 (VAFI…LSAP), 290–310 (ILIT…YVQT), 319–339 (FLLG…LVYN), and 378–398 (AVFL…WNSL).

Belongs to the major facilitator superfamily. DHA1 family. MdtG (TC 2.A.1.2.20) subfamily.

It localises to the cell inner membrane. Confers resistance to fosfomycin and deoxycholate. This chain is Multidrug resistance protein MdtG, found in Escherichia coli (strain 55989 / EAEC).